The primary structure comprises 60 residues: Large ribosomal subunit protein uL30 (60 aa).

The protein belongs to the universal ribosomal protein uL30 family. As to quaternary structure, part of the 50S ribosomal subunit.

This is Large ribosomal subunit protein uL30 from Azoarcus sp. (strain BH72).